We begin with the raw amino-acid sequence, 141 residues long: Large ribosomal subunit protein uL16 (141 aa).

A compositionally biased stretch (basic residues) spans 1 to 19 (MLMPKKTKYRKQQKGRNRG). The disordered stretch occupies residues 1–22 (MLMPKKTKYRKQQKGRNRGKAY).

The protein belongs to the universal ribosomal protein uL16 family. Part of the 50S ribosomal subunit.

Functionally, binds 23S rRNA and is also seen to make contacts with the A and possibly P site tRNAs. The chain is Large ribosomal subunit protein uL16 from Nitratiruptor sp. (strain SB155-2).